We begin with the raw amino-acid sequence, 180 residues long: Ribosome maturation factor RimM (180 aa).

A PRC barrel domain is found at 97-176 (EGEFFYCDLI…KITTNNAKTL (80 aa)).

The protein belongs to the RimM family. As to quaternary structure, binds ribosomal protein uS19.

The protein localises to the cytoplasm. In terms of biological role, an accessory protein needed during the final step in the assembly of 30S ribosomal subunit, possibly for assembly of the head region. Essential for efficient processing of 16S rRNA. May be needed both before and after RbfA during the maturation of 16S rRNA. It has affinity for free ribosomal 30S subunits but not for 70S ribosomes. The chain is Ribosome maturation factor RimM from Helicobacter acinonychis (strain Sheeba).